A 380-amino-acid polypeptide reads, in one-letter code: MISPTNLLPARKITPVSNGGAATASPSSPSVAARPRRLPSGLQSVTGRGKVSLAAITLDDYLPMRSTEVKNRTSTDDITRLRLITAVKTPYLPDGRFDLEAYDSLINMQIEGGAEGVIVGGTTGEGHLMSWDEHIMLIGHTVNCFGSRIKVIGNTGSNSTREAVHATEQGFAVGMHAALHINPYYGKTSAEGMISHFEAVLPMGPTIIYNVPSRSAQDIPPEVILAISGYTNMAGVKECVGHERVKHYADKGITIWSGNDDECHDSKWKHGATGVISVTSNLVPGLMHSLMYKGENATLNEKLSPLMKWLFCQPNPIALNTALAQLGVARPVFRLPYVPLPLEKRAEFVRIVESIGRENFVGQKEARVLDDDDFVLISRY.

The tract at residues 1 to 44 (MISPTNLLPARKITPVSNGGAATASPSSPSVAARPRRLPSGLQS) is disordered. A chloroplast-targeting transit peptide spans 1–54 (MISPTNLLPARKITPVSNGGAATASPSSPSVAARPRRLPSGLQSVTGRGKVSLA). A compositionally biased stretch (low complexity) spans 21–33 (AATASPSSPSVAA). Residue threonine 123 participates in pyruvate binding. The Proton donor/acceptor role is filled by tyrosine 209. Catalysis depends on lysine 237, which acts as the Schiff-base intermediate with substrate. Isoleucine 276 lines the pyruvate pocket.

This sequence belongs to the DapA family. Tetramer of modified subunits derived from two genes in different combinations.

Its subcellular location is the plastid. The protein localises to the chloroplast. It catalyses the reaction L-aspartate 4-semialdehyde + pyruvate = (2S,4S)-4-hydroxy-2,3,4,5-tetrahydrodipicolinate + H2O + H(+). It functions in the pathway amino-acid biosynthesis; L-lysine biosynthesis via DAP pathway; (S)-tetrahydrodipicolinate from L-aspartate: step 3/4. Sensitive to lysine inhibition. This inhibition increase in an allosteric manner with increasing concentration of the inhibitor. Its function is as follows. Catalyzes the condensation of (S)-aspartate-beta-semialdehyde [(S)-ASA] and pyruvate to 4-hydroxy-tetrahydrodipicolinate (HTPA). This chain is 4-hydroxy-tetrahydrodipicolinate synthase, chloroplastic, found in Zea mays (Maize).